The sequence spans 213 residues: Large ribosomal subunit protein uL3 (213 aa).

It belongs to the universal ribosomal protein uL3 family. As to quaternary structure, part of the 50S ribosomal subunit. Forms a cluster with proteins L14 and L19.

Functionally, one of the primary rRNA binding proteins, it binds directly near the 3'-end of the 23S rRNA, where it nucleates assembly of the 50S subunit. This chain is Large ribosomal subunit protein uL3, found in Bifidobacterium adolescentis (strain ATCC 15703 / DSM 20083 / NCTC 11814 / E194a).